The following is a 245-amino-acid chain: Uridylate kinase (245 aa).

K12 to G15 is an ATP binding site. The involved in allosteric activation by GTP stretch occupies residues G20 to G25. G54 contacts UMP. ATP is bound by residues G55 and R59. UMP contacts are provided by residues D74 and I135–T142. Positions 163, 169, and 172 each coordinate ATP.

It belongs to the UMP kinase family. Homohexamer.

Its subcellular location is the cytoplasm. It catalyses the reaction UMP + ATP = UDP + ADP. Its pathway is pyrimidine metabolism; CTP biosynthesis via de novo pathway; UDP from UMP (UMPK route): step 1/1. Its activity is regulated as follows. Allosterically activated by GTP. Inhibited by UTP. In terms of biological role, catalyzes the reversible phosphorylation of UMP to UDP. This is Uridylate kinase from Streptococcus thermophilus (strain ATCC BAA-250 / LMG 18311).